A 434-amino-acid polypeptide reads, in one-letter code: D-amino acid dehydrogenase (434 aa).

3–17 (VIILGGGVIGVTSAW) contacts FAD.

The protein belongs to the DadA oxidoreductase family. The cofactor is FAD.

The catalysed reaction is a D-alpha-amino acid + A + H2O = a 2-oxocarboxylate + AH2 + NH4(+). Its pathway is amino-acid degradation; D-alanine degradation; NH(3) and pyruvate from D-alanine: step 1/1. Its function is as follows. Oxidative deamination of D-amino acids. In Proteus mirabilis (strain HI4320), this protein is D-amino acid dehydrogenase.